The primary structure comprises 366 residues: Nitronate monooxygenase (366 aa).

FMN contacts are provided by residues Asn74, Gln181, Gly186, Gly223, and 242–245 (QLGT).

It belongs to the nitronate monooxygenase family. NMO class I subfamily. FMN serves as cofactor.

The enzyme catalyses 3 propionate 3-nitronate + 3 O2 + H2O = 3 3-oxopropanoate + 2 nitrate + nitrite + H2O2 + 3 H(+). In terms of biological role, nitronate monooxygenase that uses molecular oxygen to catalyze the oxidative denitrification of alkyl nitronates. Acts on propionate 3-nitronate (P3N), the presumed physiological substrate. Is likely involved in the degradation of P3N, that allows B.phytofirmans PsJN to grow on 3-nitropropionate/P3N as the sole source of nitrogen and carbon. Also probably functions in the detoxification of P3N, a metabolic poison produced by plants and fungi as a defense mechanism. Cannot oxidize nitroalkanes such as 3-nitropropionate, nitroethane, or 1-nitropropane. The sequence is that of Nitronate monooxygenase from Paraburkholderia phytofirmans (strain DSM 17436 / LMG 22146 / PsJN) (Burkholderia phytofirmans).